A 374-amino-acid polypeptide reads, in one-letter code: Patatin-2-Kuras 1 (374 aa).

A signal peptide spans 1-11; sequence MILATTGSTCA. The 198-residue stretch at 20–217 folds into the PNPLA domain; the sequence is LSIDGGGIKG…TVGDPALLSL (198 aa). The GXGXXG signature appears at 24–29; the sequence is GGGIKG. Residues 63–67 carry the GXSXG motif; the sequence is GTSTG. The active-site Nucleophile is S65. N103 carries N-linked (GlcNAc...) asparagine glycosylation. Catalysis depends on D203, which acts as the Proton acceptor. The short motif at 203–205 is the DGA/G element; it reads DGA. Positions 309–372 form a coiled coil; it reads ENALTGTTTE…DRKKLRANKA (64 aa).

Belongs to the patatin family. As to expression, tuber.

Its subcellular location is the vacuole. In terms of biological role, probable lipolytic acyl hydrolase (LAH), an activity which is thought to be involved in the response of tubers to pathogens. This is Patatin-2-Kuras 1 (pat2-k1) from Solanum tuberosum (Potato).